The chain runs to 41 residues: Cytochrome b559 subunit beta (41 aa).

A helical transmembrane segment spans residues 16 to 32; the sequence is WLAVHALAVPTVFFLGA. Histidine 20 contributes to the heme binding site.

This sequence belongs to the PsbE/PsbF family. In terms of assembly, heterodimer of an alpha subunit and a beta subunit. PSII is composed of 1 copy each of membrane proteins PsbA, PsbB, PsbC, PsbD, PsbE, PsbF, PsbH, PsbI, PsbJ, PsbK, PsbL, PsbM, PsbT, PsbX, PsbY, PsbZ, Psb30/Ycf12, at least 3 peripheral proteins of the oxygen-evolving complex and a large number of cofactors. It forms dimeric complexes. Heme b serves as cofactor.

It is found in the plastid. The protein localises to the chloroplast thylakoid membrane. This b-type cytochrome is tightly associated with the reaction center of photosystem II (PSII). PSII is a light-driven water:plastoquinone oxidoreductase that uses light energy to abstract electrons from H(2)O, generating O(2) and a proton gradient subsequently used for ATP formation. It consists of a core antenna complex that captures photons, and an electron transfer chain that converts photonic excitation into a charge separation. This Chlorella vulgaris (Green alga) protein is Cytochrome b559 subunit beta.